The chain runs to 387 residues: GTPase Obg (387 aa).

Residues 1–159 enclose the Obg domain; it reads MKFVDEAIIR…RSLKLELLLL (159 aa). An OBG-type G domain is found at 160–333; it reads ADVGLLGMPN…LAVKLLDFIA (174 aa). Residues 166 to 173, 191 to 195, 213 to 216, 283 to 286, and 314 to 316 contribute to the GTP site; these read GMPNAGKS, FTTLV, DIPG, NKAD, and SAY. The Mg(2+) site is built by Ser-173 and Thr-193.

Belongs to the TRAFAC class OBG-HflX-like GTPase superfamily. OBG GTPase family. In terms of assembly, monomer. Requires Mg(2+) as cofactor.

Its subcellular location is the cytoplasm. Its function is as follows. An essential GTPase which binds GTP, GDP and possibly (p)ppGpp with moderate affinity, with high nucleotide exchange rates and a fairly low GTP hydrolysis rate. Plays a role in control of the cell cycle, stress response, ribosome biogenesis and in those bacteria that undergo differentiation, in morphogenesis control. The protein is GTPase Obg of Shewanella halifaxensis (strain HAW-EB4).